The primary structure comprises 194 residues: Peptidyl-tRNA hydrolase (194 aa).

Tyr16 is a binding site for tRNA. His21 functions as the Proton acceptor in the catalytic mechanism. Phe67, Asn69, and Asn115 together coordinate tRNA.

This sequence belongs to the PTH family. In terms of assembly, monomer.

The protein localises to the cytoplasm. The enzyme catalyses an N-acyl-L-alpha-aminoacyl-tRNA + H2O = an N-acyl-L-amino acid + a tRNA + H(+). Hydrolyzes ribosome-free peptidyl-tRNAs (with 1 or more amino acids incorporated), which drop off the ribosome during protein synthesis, or as a result of ribosome stalling. In terms of biological role, catalyzes the release of premature peptidyl moieties from peptidyl-tRNA molecules trapped in stalled 50S ribosomal subunits, and thus maintains levels of free tRNAs and 50S ribosomes. This Escherichia coli O17:K52:H18 (strain UMN026 / ExPEC) protein is Peptidyl-tRNA hydrolase.